The primary structure comprises 367 residues: Alginate lyase (367 aa).

The first 27 residues, 1-27, serve as a signal peptide directing secretion; it reads MKTSHLIRIALPGALAAALLASQVSQA. Residues 65 to 66, 138 to 139, and Y256 each bind substrate; these read SK and HT.

This sequence belongs to the polysaccharide lyase 5 family.

Its subcellular location is the periplasm. It carries out the reaction Eliminative cleavage of alginate to give oligosaccharides with 4-deoxy-alpha-L-erythro-hex-4-enuronosyl groups at their non-reducing ends and beta-D-mannuronate at their reducing end.. Functionally, catalyzes the depolymerization of alginate by cleaving the beta-1,4 glycosidic bond between two adjacent sugar residues via a beta-elimination mechanism. May serve to degrade mislocalized alginate that is trapped in the periplasmic space. Acts preferentially on non-acetylated alginate or its precursor mannuronan. Is able to catalyze cleavage adjacent to either mannuronate or guluronate residues in alginate. Exhaustive digestion of alginate by AlgL generates dimeric and trimeric products. In addition to its enzymatic function, AlgL appears to be required for alginate export, maybe as part of a multi-protein alginate-secretion complex. In Pseudomonas aeruginosa (strain ATCC 15692 / DSM 22644 / CIP 104116 / JCM 14847 / LMG 12228 / 1C / PRS 101 / PAO1), this protein is Alginate lyase.